The sequence spans 438 residues: Shikimate transporter (438 aa).

A run of 12 helical transmembrane segments spans residues 28-48, 64-84, 109-129, 133-153, 168-188, 193-213, 255-275, 287-307, 318-337, 341-363, 387-407, and 411-431; these read FAGA…AALV, LAAF…GVIF, ALIG…ILLV, AIQG…SVES, VGYG…SMMT, FLSW…LGAL, IIAL…FALN, LFLN…PCFA, VYIT…FMAL, SIFW…VVCV, VASV…ITYF, and WHSV…TALL.

The protein belongs to the major facilitator superfamily. Metabolite:H+ Symporter (MHS) family (TC 2.A.1.6) family.

The protein resides in the cell inner membrane. The catalysed reaction is shikimate(in) + H(+)(in) = shikimate(out) + H(+)(out). Involved in the uptake of shikimate, an intermediate in the aromatic amino acid biosynthetic pathway. This is Shikimate transporter from Escherichia coli (strain K12).